The chain runs to 84 residues: Polcalcin Ole e 3 (84 aa).

EF-hand domains are found at residues 6-40 (QEVA…TLGS) and 41-76 (VTPE…NRGL). Ca(2+) contacts are provided by Asp-19, Asn-21, Asp-23, Lys-25, Glu-30, Asp-54, Asp-56, Asp-58, and Glu-65.

As to expression, expressed exclusively in mature pollen.

It is found in the endomembrane system. The polypeptide is Polcalcin Ole e 3 (OLE3) (Olea europaea (Common olive)).